Here is a 672-residue protein sequence, read N- to C-terminus: NADPH-Fe(3+) oxidoreductase subunit beta (672 aa).

[4Fe-4S] cluster contacts are provided by C203, C207, C211, and C215. Residue 254–283 (KKVAIVGAGPAGLACAYYLALEGYPCTIYE) participates in FAD binding. 388–421 (GKKVVVVGGGNTAIDCVRVALREGAEESTLLYRR) contacts NADP(+). Residue 552–562 (TDLEGVFAGGD) participates in FAD binding.

In terms of assembly, heterotetramer with 2 alpha subunits. Requires [4Fe-4S] cluster as cofactor. FAD serves as cofactor.

It localises to the cell membrane. Its function is as follows. Probably involved in acetate metabolism and not in the reduction of Fe(3+) chelates. May serve as a major route for NADP regeneration. The protein is NADPH-Fe(3+) oxidoreductase subunit beta (sfrB) of Geobacter sulfurreducens (strain DL-1 / KN400).